We begin with the raw amino-acid sequence, 256 residues long: Small ribosomal subunit protein eS1B (256 aa).

An N-acetylalanine; partial modification is found at alanine 2.

The protein belongs to the eukaryotic ribosomal protein eS1 family. In terms of assembly, component of the small ribosomal subunit. Mature ribosomes consist of a small (40S) and a large (60S) subunit. The 40S subunit contains about 33 different proteins and 1 molecule of RNA (18S). The 60S subunit contains about 49 different proteins and 3 molecules of RNA (25S, 5.8S and 5S).

It localises to the cytoplasm. The chain is Small ribosomal subunit protein eS1B from Scheffersomyces stipitis (strain ATCC 58785 / CBS 6054 / NBRC 10063 / NRRL Y-11545) (Yeast).